The chain runs to 383 residues: Glutaminyl-peptide cyclotransferase-like protein (383 aa).

Residues 33–53 (VQFLPLLLLALAMGLAFYIVW) traverse the membrane as a helical segment. A disulfide bond links cysteine 168 and cysteine 192. A Zn(2+)-binding site is contributed by aspartate 187. Glutamate 226 serves as the catalytic Proton acceptor. Glutamate 227 lines the Zn(2+) pocket. The active-site Proton acceptor is the aspartate 270. Histidine 352 lines the Zn(2+) pocket.

Belongs to the glutaminyl-peptide cyclotransferase family. As to expression, detected in thalamus, hippocampus, brain cortex, cerebellum, kidney, lung and liver, and at low levels in heart and spleen.

It localises to the golgi apparatus membrane. It carries out the reaction N-terminal L-glutaminyl-[peptide] = N-terminal 5-oxo-L-prolyl-[peptide] + NH4(+). Its function is as follows. Responsible for the biosynthesis of pyroglutamyl peptides. This Mus musculus (Mouse) protein is Glutaminyl-peptide cyclotransferase-like protein (Qpctl).